The primary structure comprises 60 residues: Ribosome biogenesis protein Nop10 (60 aa).

The interval 29–60 is disordered; that stretch reads CDGPTENSAPAPFSPEDPYGEYRRRVRRRASE.

Belongs to the NOP10 family.

Involved in ribosome biogenesis; more specifically in 18S rRNA pseudouridylation and in cleavage of pre-rRNA. This Halorubrum lacusprofundi (strain ATCC 49239 / DSM 5036 / JCM 8891 / ACAM 34) protein is Ribosome biogenesis protein Nop10.